A 582-amino-acid polypeptide reads, in one-letter code: 2-succinyl-5-enolpyruvyl-6-hydroxy-3-cyclohexene-1-carboxylate synthase (582 aa).

This sequence belongs to the TPP enzyme family. MenD subfamily. Homodimer. Mg(2+) serves as cofactor. The cofactor is Mn(2+). Requires thiamine diphosphate as cofactor.

It carries out the reaction isochorismate + 2-oxoglutarate + H(+) = 5-enolpyruvoyl-6-hydroxy-2-succinyl-cyclohex-3-ene-1-carboxylate + CO2. The protein operates within quinol/quinone metabolism; 1,4-dihydroxy-2-naphthoate biosynthesis; 1,4-dihydroxy-2-naphthoate from chorismate: step 2/7. It functions in the pathway cofactor biosynthesis; phylloquinone biosynthesis. In terms of biological role, catalyzes the thiamine diphosphate-dependent decarboxylation of 2-oxoglutarate and the subsequent addition of the resulting succinic semialdehyde-thiamine pyrophosphate anion to isochorismate to yield 2-succinyl-5-enolpyruvyl-6-hydroxy-3-cyclohexene-1-carboxylate (SEPHCHC). This is 2-succinyl-5-enolpyruvyl-6-hydroxy-3-cyclohexene-1-carboxylate synthase from Prochlorococcus marinus (strain MIT 9303).